The following is a 152-amino-acid chain: Glutaredoxin-related protein 5, mitochondrial (152 aa).

A mitochondrion-targeting transit peptide spans 1-31 (MSASLSRAAAALLRWGRSAGGGGLPGAGVRA). In terms of domain architecture, Glutaredoxin spans 38-141 (AEQLDALVKK…EELKKLGIRS (104 aa)). Lysine 55 contributes to the glutathione binding site. Position 55 is an N6-succinyllysine (lysine 55). Cysteine 63 provides a ligand contact to [2Fe-2S] cluster. Residues 93–97 (RQGIK), isoleucine 105, and 118–119 (CD) contribute to the glutathione site. At serine 151 the chain carries Phosphoserine.

Belongs to the glutaredoxin family. Monothiol subfamily. In terms of assembly, homodimer. Interacts with ISCU. Interacts with BOLA1. In terms of tissue distribution, detected in bone, liver, muscle and kidney.

Its subcellular location is the mitochondrion matrix. In terms of biological role, monothiol glutaredoxin involved in mitochondrial iron-sulfur (Fe/S) cluster transfer. Receives 2Fe/2S clusters from scaffold protein ISCU and mediates their transfer to apoproteins, to the 4Fe/FS cluster biosynthesis machinery, or export from mitochondrion. Required for normal regulation of hemoglobin synthesis by the iron-sulfur protein ACO1. The protein is Glutaredoxin-related protein 5, mitochondrial (Glrx5) of Mus musculus (Mouse).